Consider the following 255-residue polypeptide: Type III pantothenate kinase (255 aa).

6-13 contributes to the ATP binding site; the sequence is DVGNTHIV. Substrate-binding positions include Tyr-100 and 107-110; that span reads GADR. The active-site Proton acceptor is the Asp-109. Asp-129 is a K(+) binding site. Thr-132 lines the ATP pocket. Residue Thr-184 participates in substrate binding.

It belongs to the type III pantothenate kinase family. In terms of assembly, homodimer. Requires NH4(+) as cofactor. K(+) serves as cofactor.

The protein resides in the cytoplasm. It carries out the reaction (R)-pantothenate + ATP = (R)-4'-phosphopantothenate + ADP + H(+). The protein operates within cofactor biosynthesis; coenzyme A biosynthesis; CoA from (R)-pantothenate: step 1/5. Its function is as follows. Catalyzes the phosphorylation of pantothenate (Pan), the first step in CoA biosynthesis. This chain is Type III pantothenate kinase, found in Ruminiclostridium cellulolyticum (strain ATCC 35319 / DSM 5812 / JCM 6584 / H10) (Clostridium cellulolyticum).